Reading from the N-terminus, the 202-residue chain is Protein N-terminal glutamine amidohydrolase (202 aa).

Residues Cys27, His80, and Asp96 contribute to the active site.

This sequence belongs to the NTAQ1 family. Monomer.

The protein resides in the cytoplasm. The protein localises to the cytosol. It localises to the nucleus. The catalysed reaction is N-terminal L-glutaminyl-[protein] + H2O = N-terminal L-glutamyl-[protein] + NH4(+). Mediates the side-chain deamidation of N-terminal glutamine residues to glutamate, an important step in N-end rule pathway of protein degradation. Conversion of the resulting N-terminal glutamine to glutamate renders the protein susceptible to arginylation, polyubiquitination and degradation as specified by the N-end rule. Does not act on substrates with internal or C-terminal glutamine and does not act on non-glutamine residues in any position. Does not deaminate acetylated N-terminal glutamine. With the exception of proline, all tested second-position residues on substrate peptides do not greatly influence the activity. In contrast, a proline at position 2, virtually abolishes deamidation of N-terminal glutamine. The polypeptide is Protein N-terminal glutamine amidohydrolase (ntaq1) (Danio rerio (Zebrafish)).